We begin with the raw amino-acid sequence, 175 residues long: ATP synthase subunit delta (175 aa).

This sequence belongs to the ATPase delta chain family. F-type ATPases have 2 components, F(1) - the catalytic core - and F(0) - the membrane proton channel. F(1) has five subunits: alpha(3), beta(3), gamma(1), delta(1), epsilon(1). F(0) has three main subunits: a(1), b(2) and c(10-14). The alpha and beta chains form an alternating ring which encloses part of the gamma chain. F(1) is attached to F(0) by a central stalk formed by the gamma and epsilon chains, while a peripheral stalk is formed by the delta and b chains.

The protein resides in the cell membrane. Functionally, f(1)F(0) ATP synthase produces ATP from ADP in the presence of a proton or sodium gradient. F-type ATPases consist of two structural domains, F(1) containing the extramembraneous catalytic core and F(0) containing the membrane proton channel, linked together by a central stalk and a peripheral stalk. During catalysis, ATP synthesis in the catalytic domain of F(1) is coupled via a rotary mechanism of the central stalk subunits to proton translocation. This protein is part of the stalk that links CF(0) to CF(1). It either transmits conformational changes from CF(0) to CF(1) or is implicated in proton conduction. This Elusimicrobium minutum (strain Pei191) protein is ATP synthase subunit delta.